The primary structure comprises 262 residues: (2Z,6E)-farnesyl diphosphate synthase (262 aa).

Residue Asp40 is part of the active site. Asp40 lines the Mg(2+) pocket. Substrate-binding positions include 41–44, Trp45, and 86–88; these read GNRR and STE. The active-site Proton acceptor is Asn89. Substrate-binding positions include Arg92, Arg211, and 217–219; that span reads RLS. Position 230 (Glu230) interacts with Mg(2+).

It belongs to the UPP synthase family. Z-FPP synthase subfamily. Homodimer. The cofactor is Mg(2+).

The protein localises to the cytoplasm. It is found in the cell membrane. The catalysed reaction is isopentenyl diphosphate + (2E)-geranyl diphosphate = (2Z,6E)-farnesyl diphosphate + diphosphate. Catalyzes the condensation of only one isopentenyl pyrophosphate (IPP) unit in the cis configuration to E-geranyl diphosphate (E-GPP) generating the 15 carbon product (2Z,6E)-farnesyl diphosphate (Z-FPP or EZ-FPP). Z-FPP is the precursor of decaprenyl diphosphate, which has a central role in the biosynthesis of the mycobacterial cell wall. In Mycobacterium tuberculosis (strain CDC 1551 / Oshkosh), this protein is (2Z,6E)-farnesyl diphosphate synthase.